The primary structure comprises 372 residues: Homeobox protein Nkx-2.1 (372 aa).

The segment at residues 161–220 is a DNA-binding region (homeobox); sequence RRKRRVLFSQAQVYELERRFKQQKYLSAPEREHLASMIHLTPTQVKIWFQNHRYKMKRQA. Disordered stretches follow at residues 219 to 258, 269 to 288, and 312 to 340; these read QAKD…SPRR, KPCQ…SHAQ, and AGLG…SPAG. A compositionally biased stretch (gly residues) spans 233 to 244; it reads SGGGGGGGGGAG. Residues 245 to 254 show a composition bias toward low complexity; that stretch reads CPQQQQAQQQ. Serine 255 bears the Phosphoserine mark. The segment covering 273 to 288 has biased composition (low complexity); that stretch reads AGAPAPGAASLQSHAQ.

Belongs to the NK-2 homeobox family. As to quaternary structure, interacts with WWTR1. Phosphorylated on serine residues by STK3/MST2. Thyroid, lung and brain.

The protein localises to the nucleus. In terms of biological role, transcription factor that binds and activates the promoter of thyroid specific genes such as thyroglobulin, thyroperoxidase, and thyrotropin receptor. Crucial in the maintenance of the thyroid differentiation phenotype. May play a role in lung development and surfactant homeostasis. Forms a regulatory loop with GRHL2 that coordinates lung epithelial cell morphogenesis and differentiation. Activates the transcription of GNRHR and plays a role in enhancing the circadian oscillation of its gene expression. Represses the transcription of the circadian transcriptional repressor NR1D1. The protein is Homeobox protein Nkx-2.1 of Mus musculus (Mouse).